Consider the following 345-residue polypeptide: Trans-enoyl reductase tndF (345 aa).

The interval 1–26 (MAREHQAAILPQPGGPLSVGMRPTPK) is disordered. NADP(+)-binding positions include 44–49 (CDYYQR), 168–171 (SSSV), 191–194 (SPEH), Tyr209, and 244–245 (LD).

It belongs to the zinc-containing alcohol dehydrogenase family.

It participates in secondary metabolite biosynthesis; terpenoid biosynthesis. In terms of biological role, trans-enoyl reductase; part of the gene cluster that mediates the biosynthesis of talaronoid C, a fusicoccane diterpenoid with an unprecedented tricyclic 5/8/6 ring system. The first step in the pathway is performed by the fusicoccadiene synthase tndC that possesses both prenyl transferase and terpene cyclase activity, converting isopentenyl diphosphate and dimethylallyl diphosphate into geranylgeranyl diphosphate (GGDP) and further converting GGDP into talarodiene, a precursor for talaronoid C. The remaining enzymes from the cluster include the cytochrome P450 monooxygenase tndB, the aldehyde reductase tndE and the alcohol dehydrogenase tndF that are involved in the conversion of talarodiene into talaronoid C. This Aspergillus flavipes protein is Trans-enoyl reductase tndF.